A 283-amino-acid chain; its full sequence is Formamidopyrimidine-DNA glycosylase (283 aa).

Pro2 (schiff-base intermediate with DNA) is an active-site residue. Glu3 acts as the Proton donor in catalysis. Lys61 (proton donor; for beta-elimination activity) is an active-site residue. His94, Arg113, and Lys159 together coordinate DNA. The FPG-type zinc-finger motif lies at 245–279; the sequence is DAYGREGESCRRCGAVMRREKFMNRSSFYCPKCQP. Arg269 serves as the catalytic Proton donor; for delta-elimination activity.

Belongs to the FPG family. In terms of assembly, monomer. Zn(2+) serves as cofactor.

It catalyses the reaction Hydrolysis of DNA containing ring-opened 7-methylguanine residues, releasing 2,6-diamino-4-hydroxy-5-(N-methyl)formamidopyrimidine.. The catalysed reaction is 2'-deoxyribonucleotide-(2'-deoxyribose 5'-phosphate)-2'-deoxyribonucleotide-DNA = a 3'-end 2'-deoxyribonucleotide-(2,3-dehydro-2,3-deoxyribose 5'-phosphate)-DNA + a 5'-end 5'-phospho-2'-deoxyribonucleoside-DNA + H(+). Its function is as follows. Involved in base excision repair of DNA damaged by oxidation or by mutagenic agents. Acts as a DNA glycosylase that recognizes and removes damaged bases. Has a preference for oxidized purines, such as 7,8-dihydro-8-oxoguanine (8-oxoG). Has AP (apurinic/apyrimidinic) lyase activity and introduces nicks in the DNA strand. Cleaves the DNA backbone by beta-delta elimination to generate a single-strand break at the site of the removed base with both 3'- and 5'-phosphates. This is Formamidopyrimidine-DNA glycosylase from Mycobacterium avium (strain 104).